Reading from the N-terminus, the 692-residue chain is MARQHKIEDYRNFGIMAHIDAGKTTTTERILYYTGKSHKIGEVHDGAATMDWMDQEQERGITITSAATTAFWKEKRLNIIDTPGHVDFTIEVERSLRVLDGAVAVLDGNAGVEPQTETVWRQADKYKVPRIVFVNKMDKIGADFDKSVESIRDRLGAKAVPIQFPIGSETSLSGLVDLVRMKAVVWDNDALGANFRDEEIPADLMAKAVEAHAYLVEAAVEMDDEAMEAYLGGEEPSEAVLKKCIRKAVLVGAFYPILCGSAFKNKGVQTLLDAVVDYLPSPLDIPPTKGIDFKTEEEVVRHASDEEPLSVLAFKIMDDPFVGSLTFCRIYSGKLETGMSLLNATRDKRERVGRMLLMHSNNREDIKEAYAGDIVALAGLKDTRTGDTLCDPLKSPVILERMEFPAPVIEIAVEPKSKADQEKLGVALAKLAAEDPSFTVSTDFESGQTILKGMGELHLDIKIDILKRTYKVEANIGAPQVAYRESLGRKVDIDYTHKKQTGGTGQFARVMITFEPGEPGSGFVFENSIVGGAVPKEYIPGVEKGLMSVKDNGLLAGFPLIDFKATLTDGKYHDVDSSVLAFEIASRAAFKELREKGAPKLLEPIMAVEVVTPEEYLGSVIGDLNSRRGMIQGQDMRGNATVVNAYVPLANMFGYVNTLRGMSQGRAQFTMQYDHYEPVPQHVADEVIKKYA.

Residues 8–283 (EDYRNFGIMA…AVVDYLPSPL (276 aa)) enclose the tr-type G domain. Residues 17–24 (AHIDAGKT), 81–85 (DTPGH), and 135–138 (NKMD) each bind GTP.

It belongs to the TRAFAC class translation factor GTPase superfamily. Classic translation factor GTPase family. EF-G/EF-2 subfamily.

It is found in the cytoplasm. Functionally, catalyzes the GTP-dependent ribosomal translocation step during translation elongation. During this step, the ribosome changes from the pre-translocational (PRE) to the post-translocational (POST) state as the newly formed A-site-bound peptidyl-tRNA and P-site-bound deacylated tRNA move to the P and E sites, respectively. Catalyzes the coordinated movement of the two tRNA molecules, the mRNA and conformational changes in the ribosome. The chain is Elongation factor G from Caulobacter sp. (strain K31).